A 419-amino-acid polypeptide reads, in one-letter code: Glutamyl-tRNA reductase (419 aa).

Residues 50–53 (TCNR), serine 108, 113–115 (ETQ), and glutamine 119 each bind substrate. Cysteine 51 acts as the Nucleophile in catalysis. 188–193 (GAGEMI) lines the NADP(+) pocket.

It belongs to the glutamyl-tRNA reductase family. Homodimer.

It catalyses the reaction (S)-4-amino-5-oxopentanoate + tRNA(Glu) + NADP(+) = L-glutamyl-tRNA(Glu) + NADPH + H(+). It functions in the pathway porphyrin-containing compound metabolism; protoporphyrin-IX biosynthesis; 5-aminolevulinate from L-glutamyl-tRNA(Glu): step 1/2. Functionally, catalyzes the NADPH-dependent reduction of glutamyl-tRNA(Glu) to glutamate 1-semialdehyde (GSA). The sequence is that of Glutamyl-tRNA reductase from Albidiferax ferrireducens (strain ATCC BAA-621 / DSM 15236 / T118) (Rhodoferax ferrireducens).